The chain runs to 678 residues: DNA gyrase subunit B (678 aa).

The Toprim domain maps to 456–570; the sequence is SELYVVEGDS…HGYVFLAQPP (115 aa). Mg(2+) is bound by residues E462, D535, and D537.

The protein belongs to the type II topoisomerase GyrB family. In terms of assembly, heterotetramer, composed of two GyrA and two GyrB chains. In the heterotetramer, GyrA contains the active site tyrosine that forms a transient covalent intermediate with the DNA, while GyrB binds cofactors catalyzes ATP hydrolysis. It depends on Mg(2+) as a cofactor. Requires Mn(2+) as cofactor. Ca(2+) is required as a cofactor.

It localises to the cytoplasm. The catalysed reaction is ATP-dependent breakage, passage and rejoining of double-stranded DNA.. With respect to regulation, DNA supercoiling is inhibited by fluoroquinolones; IC(50) 1 ug/ml for sitafloxacin. In terms of biological role, a type II topoisomerase that negatively supercoils closed circular double-stranded (ds) DNA in an ATP-dependent manner to modulate DNA topology and maintain chromosomes in an underwound state. Negative supercoiling favors strand separation, and DNA replication, transcription, recombination and repair, all of which involve strand separation. Also able to catalyze the interconversion of other topological isomers of dsDNA rings, including catenanes and knotted rings. Type II topoisomerases break and join 2 DNA strands simultaneously in an ATP-dependent manner. In Mycobacterium leprae (strain TN), this protein is DNA gyrase subunit B.